We begin with the raw amino-acid sequence, 645 residues long: ATP-dependent zinc metalloprotease FtsH 1 (645 aa).

The Cytoplasmic portion of the chain corresponds to 1-6 (MRSTQK). The helical transmembrane segment at 7-27 (TLALWFFLIIMAVFLFQAYES) threads the bilayer. The Periplasmic portion of the chain corresponds to 28–110 (KQQKAIADFN…NYERADNGGF (83 aa)). A helical transmembrane segment spans residues 111-131 (FQSLLVNWLPLILIVAMFLFI). Over 132–645 (MRQIQAGGGK…PVGNTGPVTI (514 aa)) the chain is Cytoplasmic. 203–210 (GSPGTGKT) serves as a coordination point for ATP. Zn(2+) is bound at residue H425. E426 is a catalytic residue. Zn(2+)-binding residues include H429 and D501.

It in the central section; belongs to the AAA ATPase family. This sequence in the C-terminal section; belongs to the peptidase M41 family. As to quaternary structure, homohexamer. Zn(2+) is required as a cofactor.

The protein localises to the cell inner membrane. In terms of biological role, acts as a processive, ATP-dependent zinc metallopeptidase for both cytoplasmic and membrane proteins. Plays a role in the quality control of integral membrane proteins. This is ATP-dependent zinc metalloprotease FtsH 1 from Bdellovibrio bacteriovorus (strain ATCC 15356 / DSM 50701 / NCIMB 9529 / HD100).